Consider the following 150-residue polypeptide: U1 small nuclear ribonucleoprotein C (150 aa).

The segment at 4 to 36 (YYCDYCKSYLTHDTMSVRKSHLQGRNHIKFYCD) adopts a Matrin-type zinc-finger fold. The segment at 66–132 (SDAKKSNGSS…GLPLPPPAVY (67 aa)) is disordered. Over residues 80 to 92 (DIDKKENSSDHNK) the composition is skewed to basic and acidic residues. Positions 103–112 (NDNDDDDDEM) are enriched in acidic residues. Over residues 115 to 130 (LPPPPNLSGLPLPPPA) the composition is skewed to pro residues.

This sequence belongs to the U1 small nuclear ribonucleoprotein C family. In terms of assembly, U1 snRNP is composed of the 7 core Sm proteins B/B', D1, D2, D3, E, F and G that assemble in a heptameric protein ring on the Sm site of the small nuclear RNA to form the core snRNP, and at least 3 U1 snRNP-specific proteins U1-70K, U1-A and U1-C. U1-C interacts with U1 snRNA and the 5' splice-site region of the pre-mRNA.

It is found in the nucleus. Component of the spliceosomal U1 snRNP, which is essential for recognition of the pre-mRNA 5' splice-site and the subsequent assembly of the spliceosome. U1-C is directly involved in initial 5' splice-site recognition for both constitutive and regulated alternative splicing. The interaction with the 5' splice-site seems to precede base-pairing between the pre-mRNA and the U1 snRNA. Stimulates commitment or early (E) complex formation by stabilizing the base pairing of the 5' end of the U1 snRNA and the 5' splice-site region. This chain is U1 small nuclear ribonucleoprotein C, found in Candida albicans (strain SC5314 / ATCC MYA-2876) (Yeast).